The sequence spans 57 residues: UPF0391 membrane protein XOO1885 (57 aa).

2 helical membrane passes run 4-24 (WAII…GGMA) and 33-53 (FLFW…MTIA).

This sequence belongs to the UPF0391 family.

It is found in the cell membrane. The protein is UPF0391 membrane protein XOO1885 of Xanthomonas oryzae pv. oryzae (strain KACC10331 / KXO85).